The chain runs to 321 residues: Cytochrome c biogenesis protein CcsA (321 aa).

8 helical membrane passes run 9–29, 44–64, 71–91, 97–117, 143–163, 227–247, 261–275, and 288–308; these read ILTHISFSIVSIVITIYLMTL, GLIATFFCITGFLVIRWIYSG, LYESLMFLSWSFSIIHMVPYF, LLSTITAPSAIFTQGFATSGL, MILSYAALLCGSLLSIALLVI, VISLGFIFLTIGILSGAVWAN, TWAFITWTIFAIYLH, and AIVASIGFLIIWICYFGVNLL.

The protein belongs to the CcmF/CycK/Ccl1/NrfE/CcsA family. In terms of assembly, may interact with Ccs1.

It localises to the plastid. Its subcellular location is the chloroplast thylakoid membrane. Required during biogenesis of c-type cytochromes (cytochrome c6 and cytochrome f) at the step of heme attachment. This is Cytochrome c biogenesis protein CcsA from Nandina domestica (Heavenly bamboo).